Consider the following 565-residue polypeptide: Arginine--tRNA ligase (565 aa).

Residues 128-138 carry the 'HIGH' region motif; that stretch reads ANPTGPLHVGH.

This sequence belongs to the class-I aminoacyl-tRNA synthetase family. In terms of assembly, monomer.

The protein resides in the cytoplasm. The enzyme catalyses tRNA(Arg) + L-arginine + ATP = L-arginyl-tRNA(Arg) + AMP + diphosphate. This Delftia acidovorans (strain DSM 14801 / SPH-1) protein is Arginine--tRNA ligase.